Consider the following 128-residue polypeptide: Large ribosomal subunit protein bL20 (128 aa).

Belongs to the bacterial ribosomal protein bL20 family.

Functionally, binds directly to 23S ribosomal RNA and is necessary for the in vitro assembly process of the 50S ribosomal subunit. It is not involved in the protein synthesizing functions of that subunit. In Anaplasma phagocytophilum (strain HZ), this protein is Large ribosomal subunit protein bL20.